We begin with the raw amino-acid sequence, 499 residues long: D-alanine--D-alanyl carrier protein ligase (499 aa).

152–153 (TS) contributes to the ATP binding site. D197 lines the D-alanine pocket. ATP contacts are provided by residues 292-297 (NTYGPT), D372, 384-387 (YQGR), and K485. A D-alanine-binding site is contributed by K485.

It belongs to the ATP-dependent AMP-binding enzyme family. DltA subfamily.

Its subcellular location is the cytoplasm. The enzyme catalyses holo-[D-alanyl-carrier protein] + D-alanine + ATP = D-alanyl-[D-alanyl-carrier protein] + AMP + diphosphate. Its pathway is cell wall biogenesis; lipoteichoic acid biosynthesis. Its function is as follows. Catalyzes the first step in the D-alanylation of lipoteichoic acid (LTA), the activation of D-alanine and its transfer onto the D-alanyl carrier protein (Dcp) DltC. In an ATP-dependent two-step reaction, forms a high energy D-alanyl-AMP intermediate, followed by transfer of the D-alanyl residue as a thiol ester to the phosphopantheinyl prosthetic group of the Dcp. D-alanylation of LTA plays an important role in modulating the properties of the cell wall in Gram-positive bacteria, influencing the net charge of the cell wall. This is D-alanine--D-alanyl carrier protein ligase from Lactococcus lactis subsp. lactis (strain IL1403) (Streptococcus lactis).